The primary structure comprises 250 residues: 5'-nucleotidase SurE (250 aa).

Residues aspartate 8, aspartate 9, serine 39, and asparagine 92 each contribute to the a divalent metal cation site.

The protein belongs to the SurE nucleotidase family. It depends on a divalent metal cation as a cofactor.

It localises to the cytoplasm. The enzyme catalyses a ribonucleoside 5'-phosphate + H2O = a ribonucleoside + phosphate. Its function is as follows. Nucleotidase that shows phosphatase activity on nucleoside 5'-monophosphates. The sequence is that of 5'-nucleotidase SurE from Vibrio cholerae serotype O1 (strain ATCC 39315 / El Tor Inaba N16961).